Consider the following 237-residue polypeptide: Demethylmenaquinone methyltransferase (237 aa).

Residues T62, D80, 102–103, and S119 contribute to the S-adenosyl-L-methionine site; that span reads DA.

It belongs to the class I-like SAM-binding methyltransferase superfamily. MenG/UbiE family.

It carries out the reaction a 2-demethylmenaquinol + S-adenosyl-L-methionine = a menaquinol + S-adenosyl-L-homocysteine + H(+). It functions in the pathway quinol/quinone metabolism; menaquinone biosynthesis; menaquinol from 1,4-dihydroxy-2-naphthoate: step 2/2. Its function is as follows. Methyltransferase required for the conversion of demethylmenaquinol (DMKH2) to menaquinol (MKH2). The protein is Demethylmenaquinone methyltransferase of Renibacterium salmoninarum (strain ATCC 33209 / DSM 20767 / JCM 11484 / NBRC 15589 / NCIMB 2235).